The primary structure comprises 339 residues: tRNA methyltransferase 10 homolog A (339 aa).

Disordered stretches follow at residues 1–90 (MSSE…HDRK) and 282–339 (DKAC…SLPH). Residues 14–35 (NVDKKQGINEDQEESQKPRLGE) show a composition bias toward basic and acidic residues. Residues 52–81 (KQWEEQRELRKQKRKEKRKRKKLERQCQME) adopt a coiled-coil conformation. A compositionally biased stretch (basic residues) spans 61 to 74 (RKQKRKEKRKRKKL). The SAM-dependent MTase TRM10-type domain occupies 89 to 279 (RKRVRRDVVH…TILPQRKGAV (191 aa)). A compositionally biased stretch (acidic residues) spans 300–309 (GGSDSDSSEE). Positions 310-330 (EYSRNELDSPHEEKQDKENHT) are enriched in basic and acidic residues. Serine 336 carries the post-translational modification Phosphoserine.

Belongs to the class IV-like SAM-binding methyltransferase superfamily. TRM10 family. As to quaternary structure, interacts with tRNA. In terms of tissue distribution, expressed in embryonic and fetal brain. It is expressed throughout the dorsal telencephalon at 8 and 11 weeks of gestation, with highest expression in ventricular zone and marginal zone. Detected in cerebellar cortex and nuclei, but not in dorsal telencephalon, at later stages.

It localises to the nucleus. The protein localises to the nucleolus. It carries out the reaction guanosine(9) in tRNA + S-adenosyl-L-methionine = N(1)-methylguanosine(9) in tRNA + S-adenosyl-L-homocysteine + H(+). Its function is as follows. S-adenosyl-L-methionine-dependent guanine N(1)-methyltransferase that catalyzes the formation of N(1)-methylguanine at position 9 (m1G9) in tRNAs. Probably not able to catalyze formation of N(1)-methyladenine at position 9 (m1A9) in tRNAs. The polypeptide is tRNA methyltransferase 10 homolog A (TRMT10A) (Homo sapiens (Human)).